The primary structure comprises 469 residues: Properdin (469 aa).

Residues 1–27 form the signal peptide; it reads MITEGAQAPRLLLPPLLLLLTLPATGS. 7 consecutive TSP type-1 domains span residues 28–76, 77–134, 136–191, 193–255, 257–313, 315–377, and 379–462; these read DPVL…QPCR, SPRW…QCCP, MGGW…QSCP, HGAW…PPCP, AGSW…VPCP, DGEW…QHCP, and KGSW…PACK. Intrachain disulfides connect cysteine 32–cysteine 56, cysteine 43–cysteine 72, and cysteine 57–cysteine 75. C-linked (Man) tryptophan glycosylation is found at tryptophan 83 and tryptophan 86. Intrachain disulfides connect cysteine 89–cysteine 127, cysteine 93–cysteine 133, cysteine 104–cysteine 111, cysteine 132–cysteine 170, cysteine 148–cysteine 184, cysteine 152–cysteine 190, and cysteine 163–cysteine 174. Tryptophan 139, tryptophan 142, and tryptophan 145 each carry a C-linked (Man) tryptophan glycan. The O-linked (Fuc...) threonine glycan is linked to threonine 151. Residues tryptophan 196, tryptophan 199, and tryptophan 202 are each glycosylated (C-linked (Man) tryptophan). 3 cysteine pairs are disulfide-bonded: cysteine 205/cysteine 248, cysteine 209/cysteine 254, and cysteine 224/cysteine 238. O-linked (Fuc...) serine glycosylation is present at serine 208. The tract at residues 218–238 is disordered; the sequence is ETRSRKCSAPEPSQKPPGKPC. 2 C-linked (Man) tryptophan glycosylation sites follow: tryptophan 260 and tryptophan 263. Disulfide bonds link cysteine 269/cysteine 306, cysteine 273/cysteine 312, and cysteine 284/cysteine 296. O-linked (Fuc...) threonine glycosylation occurs at threonine 272. Tryptophan 321 and tryptophan 324 each carry a C-linked (Man) tryptophan glycan. Disulfide bonds link cysteine 327–cysteine 370, cysteine 337–cysteine 376, and cysteine 350–cysteine 360. The tract at residues 351-359 is interaction with Complement C3 beta chain; sequence KGRKFDGHR. Residues tryptophan 382, tryptophan 385, and tryptophan 388 are each glycosylated (C-linked (Man) tryptophan). 3 disulfide bridges follow: cysteine 391–cysteine 455, cysteine 395–cysteine 461, and cysteine 407–cysteine 439. The N-linked (GlcNAc...) asparagine glycan is linked to asparagine 428.

As to quaternary structure, in plasma, properdin exists as dimers, trimers or tetramers in the relative proportions of 26:54:20. Interacts with the pro-C3-convertase enzyme complex (C3b-Bb) comprised of Complement C3 beta chain (C3b) and the Complement factor B Bb fragment (Bb), where it binds (via its TSP type-1 5 domain) with C3b and Bb. This interaction stabilizes the complex and allows it to become the active C3-convertase enzyme complex (C3b-Bb-FP). Interacts with C3b. Interacts with CFB.

The protein localises to the secreted. Its function is as follows. A positive regulator of the alternate pathway of complement. It binds to and stabilizes the C3- and C5-convertase enzyme complexes. Inhibits CFI-CFH mediated degradation of Inhibits CFI-CFH mediated degradation of Complement C3 beta chain (C3b). The chain is Properdin (CFP) from Pongo abelii (Sumatran orangutan).